Reading from the N-terminus, the 335-residue chain is Hsp90 co-chaperone Cdc37-like 1 (335 aa).

Residues 1–11 (MEQPWPPPGPW) are compositionally biased toward pro residues. A disordered region spans residues 1–42 (MEQPWPPPGPWSFPRTGGETEEESDLDVSPSSSHYSPVPDGG). The segment at 2-170 (EQPWPPPGPW…YEQKIRHFGM (169 aa)) is self-association. Positions 27–40 (DVSPSSSHYSPVPD) are enriched in low complexity. Phosphoserine is present on residues Ser32 and Ser88. The stretch at 84–120 (HNSESLDQEHAKAQTAVSELRQREEEWRQKEEALVQR) forms a coiled coil. The tract at residues 147-276 (KTEDEDKSQS…ARVRLYAQSQ (130 aa)) is self-association and interaction with Hsp90. Positions 266 to 335 (KARVRLYAQS…EDDDRMMDTV (70 aa)) are interaction with Hsp70. The segment at 277-335 (SFAPVTVENHAPHSGVGCIGSAEPLPQNPDSLQCCPPAPLCSVDSVVHKEDDDRMMDTV) is required for interaction with STIP1.

The protein belongs to the CDC37 family. Self-associates. Forms complexes with Hsp70 and Hsp90. Interacts with CDC37, FKBP4, PPID and STIP1.

It is found in the cytoplasm. Co-chaperone that binds to numerous proteins and promotes their interaction with Hsp70 and Hsp90. This chain is Hsp90 co-chaperone Cdc37-like 1 (Cdc37l1), found in Rattus norvegicus (Rat).